Reading from the N-terminus, the 822-residue chain is Anaphase-promoting complex subunit 2 (822 aa).

5 positions are modified to phosphoserine: S218, S314, S470, S534, and S697. Residues 450 to 495 (GDLAVELSKTDPASLETGQDSEDDSGEPEDWVPDPVDADPGKSSSK) are disordered. The span at 468–481 (QDSEDDSGEPEDWV) shows a compositional bias: acidic residues. Residues 502–700 (ISLLVSIYGS…LLRRRMSVWL (199 aa)) form a cullin homology region. Y810 is modified (phosphotyrosine).

Belongs to the cullin family. As to quaternary structure, the mammalian APC/C is composed at least of 14 distinct subunits ANAPC1, ANAPC2, CDC27/APC3, ANAPC4, ANAPC5, CDC16/APC6, ANAPC7, CDC23/APC8, ANAPC10, ANAPC11, CDC26/APC12, ANAPC13, ANAPC15 and ANAPC16 that assemble into a complex of at least 19 chains with a combined molecular mass of around 1.2 MDa; APC/C interacts with FZR1 and FBXO5. In the context of the APC/C complex, directly interacts with UBE2C and UBE2S. Interacts (via cullin domain) with ANAPC11 and with UBCH10. Interacts with NEUROD2. Interacts with FBXO43; the interaction is direct.

It participates in protein modification; protein ubiquitination. In terms of biological role, together with the RING-H2 protein ANAPC11, constitutes the catalytic component of the anaphase promoting complex/cyclosome (APC/C), a cell cycle-regulated E3 ubiquitin ligase that controls progression through mitosis and the G1 phase of the cell cycle. The APC/C complex acts by mediating ubiquitination and subsequent degradation of target proteins: it mainly mediates the formation of 'Lys-11'-linked polyubiquitin chains and, to a lower extent, the formation of 'Lys-48'- and 'Lys-63'-linked polyubiquitin chains. The APC/C complex catalyzes assembly of branched 'Lys-11'-/'Lys-48'-linked branched ubiquitin chains on target proteins. The CDC20-APC/C complex positively regulates the formation of synaptic vesicle clustering at active zone to the presynaptic membrane in postmitotic neurons. CDC20-APC/C-induced degradation of NEUROD2 drives presynaptic differentiation. The protein is Anaphase-promoting complex subunit 2 (ANAPC2) of Homo sapiens (Human).